Reading from the N-terminus, the 400-residue chain is Enoyl-[acyl-carrier-protein] reductase [NADH] (400 aa).

NAD(+) contacts are provided by residues 48–53, 74–75, 111–112, and 139–140; these read GSSSGY, FE, DA, and LA. Tyr-225 is a substrate binding site. Tyr-235 (proton donor) is an active-site residue. Residues Lys-244 and 273–275 each bind NAD(+); that span reads VVT.

The protein belongs to the TER reductase family. In terms of assembly, monomer.

It carries out the reaction a 2,3-saturated acyl-[ACP] + NAD(+) = a (2E)-enoyl-[ACP] + NADH + H(+). It functions in the pathway lipid metabolism; fatty acid biosynthesis. Functionally, involved in the final reduction of the elongation cycle of fatty acid synthesis (FAS II). Catalyzes the reduction of a carbon-carbon double bond in an enoyl moiety that is covalently linked to an acyl carrier protein (ACP). This Shewanella oneidensis (strain ATCC 700550 / JCM 31522 / CIP 106686 / LMG 19005 / NCIMB 14063 / MR-1) protein is Enoyl-[acyl-carrier-protein] reductase [NADH].